We begin with the raw amino-acid sequence, 255 residues long: Acetylglutamate kinase (255 aa).

Residues 40 to 41 (GG), arginine 62, and asparagine 153 each bind substrate.

It belongs to the acetylglutamate kinase family. ArgB subfamily.

Its subcellular location is the cytoplasm. The enzyme catalyses N-acetyl-L-glutamate + ATP = N-acetyl-L-glutamyl 5-phosphate + ADP. Its pathway is amino-acid biosynthesis; L-arginine biosynthesis; N(2)-acetyl-L-ornithine from L-glutamate: step 2/4. Functionally, catalyzes the ATP-dependent phosphorylation of N-acetyl-L-glutamate. In Bacillus thuringiensis subsp. konkukian (strain 97-27), this protein is Acetylglutamate kinase.